A 490-amino-acid chain; its full sequence is ABC transporter ATP-binding protein ModF (490 aa).

ABC transporter domains are found at residues 4-235 (LQIL…AHSE) and 261-489 (IVLN…LTKI). ATP is bound by residues 36–43 (GSNGSGKS) and 293–300 (GPNGAGKS).

Belongs to the ABC transporter superfamily.

It is found in the cell inner membrane. Its function is as follows. Probably not involved in the transport of molybdenum into the cell. The protein is ABC transporter ATP-binding protein ModF (modF) of Escherichia coli (strain K12).